The chain runs to 414 residues: 2,3-bisphosphoglycerate-independent phosphoglycerate mutase (414 aa).

The protein belongs to the BPG-independent phosphoglycerate mutase family. A-PGAM subfamily.

The catalysed reaction is (2R)-2-phosphoglycerate = (2R)-3-phosphoglycerate. It participates in carbohydrate degradation; glycolysis; pyruvate from D-glyceraldehyde 3-phosphate: step 3/5. In terms of biological role, catalyzes the interconversion of 2-phosphoglycerate and 3-phosphoglycerate. The chain is 2,3-bisphosphoglycerate-independent phosphoglycerate mutase from Saccharolobus solfataricus (strain ATCC 35092 / DSM 1617 / JCM 11322 / P2) (Sulfolobus solfataricus).